The primary structure comprises 476 residues: Cysteine--tRNA ligase (476 aa).

Residue Cys-28 coordinates Zn(2+). The 'HIGH' region signature appears at 30-40 (VTTYDFCHIGH). Zn(2+) is bound by residues Cys-215, His-241, and Glu-245. Positions 273-277 (KMSKS) match the 'KMSKS' region motif. Lys-276 is an ATP binding site.

This sequence belongs to the class-I aminoacyl-tRNA synthetase family. In terms of assembly, monomer. Zn(2+) is required as a cofactor.

The protein resides in the cytoplasm. The enzyme catalyses tRNA(Cys) + L-cysteine + ATP = L-cysteinyl-tRNA(Cys) + AMP + diphosphate. This chain is Cysteine--tRNA ligase, found in Buchnera aphidicola subsp. Cinara cedri (strain Cc).